Reading from the N-terminus, the 459-residue chain is Argininosuccinate lyase (459 aa).

Belongs to the lyase 1 family. Argininosuccinate lyase subfamily.

The protein resides in the cytoplasm. The enzyme catalyses 2-(N(omega)-L-arginino)succinate = fumarate + L-arginine. Its pathway is amino-acid biosynthesis; L-arginine biosynthesis; L-arginine from L-ornithine and carbamoyl phosphate: step 3/3. This is Argininosuccinate lyase from Geobacillus sp. (strain WCH70).